Here is a 244-residue protein sequence, read N- to C-terminus: Lymphotoxin-beta (244 aa).

Residues 1 to 18 (MGALGLEGRGGRLQGRGS) lie on the Cytoplasmic side of the membrane. Residues 19–48 (LLLAVAGATSLVTLLLAVPITVLAVLALVP) form a helical; Signal-anchor for type II membrane protein membrane-spanning segment. The Extracellular segment spans residues 49-244 (QDQGGLVTET…KTFFGAVMVG (196 aa)). Residues 88-243 (PAAHLIGAPL…GKTFFGAVMV (156 aa)) enclose the THD domain. Asparagine 222 is a glycosylation site (N-linked (GlcNAc...) asparagine).

It belongs to the tumor necrosis factor family. In terms of assembly, heterotrimer of either two LTB and one LTA subunits or (less prevalent) two LTA and one LTB subunits.

The protein localises to the membrane. Cytokine that binds to LTBR/TNFRSF3. May play a specific role in immune response regulation. Provides the membrane anchor for the attachment of the heterotrimeric complex to the cell surface. The polypeptide is Lymphotoxin-beta (LTB) (Pan troglodytes (Chimpanzee)).